We begin with the raw amino-acid sequence, 447 residues long: Sporulation protein YpeB (447 aa).

It belongs to the YpeB family.

Functionally, required for spore cortex hydrolysis during germination. Appears to be required for either expression, localization, activation or function of SleB. The protein is Sporulation protein YpeB of Oceanobacillus iheyensis (strain DSM 14371 / CIP 107618 / JCM 11309 / KCTC 3954 / HTE831).